A 970-amino-acid polypeptide reads, in one-letter code: m7GpppN-mRNA hydrolase (970 aa).

Residues 101–228 (KSIPVRGAAI…IKYYLINSMM (128 aa)) enclose the Nudix hydrolase domain. Serine 116 is modified (phosphoserine). The short motif at 134-155 (GKISKDENDIDCCIREVKEEIG) is the Nudix box element. Mn(2+) contacts are provided by glutamate 149 and glutamate 153. Residues 302 to 314 (QHLKEQSGEHNQQ) show a composition bias toward basic and acidic residues. Disordered stretches follow at residues 302 to 341 (QHLKEQSGEHNQQKDQQSSFSSQQQPSIFPSLSEPFANNK), 417 to 465 (AVSQ…PKLK), 501 to 520 (SSQKIHASKPDTSFLPNDSV), and 528 to 692 (YEDF…LSST). Residues 315 to 334 (KDQQSSFSSQQQPSIFPSLS) show a composition bias toward low complexity. At serine 439 the chain carries Phosphoserine. Positions 528–539 (YEDFESSSDEEV) are enriched in acidic residues. Basic and acidic residues predominate over residues 560–576 (SEKDSRRSQKEKPRNDA). Polar residues predominate over residues 577–590 (SKTNLNASAESNSV). A compositionally biased stretch (low complexity) spans 596-608 (KSSPSTQSKQNSS). Residues 625–637 (DAYEVFESSSDEE) are compositionally biased toward acidic residues. Threonine 677 bears the Phosphothreonine mark. Positions 677 to 691 (TESNKSINETVGLSS) are enriched in polar residues. 6 positions are modified to phosphoserine: serine 679, serine 682, serine 751, serine 771, serine 773, and serine 778. The tract at residues 831-867 (LKKNDSTGYPRTEGGPSSEMSTSMKRNDATNNQELDK) is disordered. Positions 848–863 (SEMSTSMKRNDATNNQ) are enriched in polar residues.

This sequence belongs to the Nudix hydrolase family. DCP2 subfamily. As to quaternary structure, component of the decapping complex composed of DCP1 and DCP2. Interacts with mRNA, LSM2, LSM4 and LSM8. Interacts with EDC3. It depends on Mn(2+) as a cofactor.

It is found in the cytoplasm. The protein resides in the P-body. It catalyses the reaction a 5'-end (N(7)-methyl 5'-triphosphoguanosine)-ribonucleoside in mRNA + H2O = N(7)-methyl-GDP + a 5'-end phospho-ribonucleoside in mRNA + 2 H(+). In terms of biological role, catalytic component of the decapping complex necessary for the degradation of mRNAs, both in normal mRNA turnover and in nonsense-mediated mRNA decay. Removes the 7-methyl guanine cap structure from mRNA molecules, yielding a 5'-phosphorylated mRNA fragment and 7m-GDP. Decapping is the major pathway of mRNA degradation in yeast and occurs through deadenylation, decapping and subsequent 5' to 3' exonucleolytic decay of the transcript body. Blocks autophagy in nutrient-rich conditions by repressing the expression of ATG-related genes through degradation of their transcripts. In Saccharomyces cerevisiae (strain ATCC 204508 / S288c) (Baker's yeast), this protein is m7GpppN-mRNA hydrolase.